Consider the following 150-residue polypeptide: Large ribosomal subunit protein bL9 (150 aa).

Belongs to the bacterial ribosomal protein bL9 family.

Functionally, binds to the 23S rRNA. The polypeptide is Large ribosomal subunit protein bL9 (Streptococcus sanguinis (strain SK36)).